A 612-amino-acid chain; its full sequence is Heparan-sulfate 6-O-sulfotransferase 2 (612 aa).

Residues 1–4 (MALP) are Cytoplasmic-facing. Residues 5–27 (AFAARALGPPLQPEQGAPARTTC) traverse the membrane as a helical; Signal-anchor for type II membrane protein segment. The tract at residues 9–52 (RALGPPLQPEQGAPARTTCPRRHSRVEAELAASRPGSVAASVRA) is disordered. The Lumenal segment spans residues 28 to 612 (PRRHSRVEAE…DYIGSVETWR (585 aa)). N-linked (GlcNAc...) asparagine glycosylation occurs at Asn209. A 3'-phosphoadenylyl sulfate-binding site is contributed by 233–241 (HIQKTGGTT). Substrate is bound by residues 263–264 (KK), Arg280, Trp285, and His290. Residue His290 is the Proton acceptor of the active site. Positions 325 and 333 each coordinate 3'-phosphoadenylyl sulfate. Substrate contacts are provided by His337 and Trp344. Asn404 carries an N-linked (GlcNAc...) asparagine glycan. Residue 457-459 (TQY) coordinates 3'-phosphoadenylyl sulfate. The N-linked (GlcNAc...) asparagine glycan is linked to Asn460. 463–464 (RA) serves as a coordination point for 3'-phosphoadenylyl sulfate. The disordered stretch occupies residues 529–612 (HFQSQSQGQS…DYIGSVETWR (84 aa)). A compositionally biased stretch (low complexity) spans 531-564 (QSQSQGQSQSQSPGQNLSQNPNPNPNQNLTQNLS). 5 N-linked (GlcNAc...) asparagine glycosylation sites follow: Asn546, Asn558, Asn562, Asn574, and Asn599. Polar residues predominate over residues 565–577 (HNLTPSSNPNSTQ).

The protein belongs to the sulfotransferase 6 family.

The protein localises to the membrane. It catalyses the reaction alpha-D-glucosaminyl-[heparan sulfate](n) + 3'-phosphoadenylyl sulfate = 6-sulfo-alpha-D-glucosaminyl-[heparan sulfate](n) + adenosine 3',5'-bisphosphate + H(+). Functionally, 6-O-sulfation enzyme which catalyzes the transfer of sulfate from 3'-phosphoadenosine 5'-phosphosulfate (PAPS) to position 6 of the N-sulfoglucosamine residue (GlcNS) of heparan sulfate. The polypeptide is Heparan-sulfate 6-O-sulfotransferase 2 (Hs6st2) (Mus musculus (Mouse)).